The sequence spans 75 residues: Porwaprin-d (75 aa).

The first 24 residues, 1-24, serve as a signal peptide directing secretion; that stretch reads MSSGGLLLLLGLLTLWAELTPVSS. The WAP domain maps to 27–72; the sequence is RPKKPGLCPPRPQKPPCVRECKNDWRCPGEQKCCRYGCIYECRDPI. Cystine bridges form between Cys-34/Cys-60, Cys-43/Cys-64, Cys-47/Cys-59, and Cys-53/Cys-68.

This sequence belongs to the venom waprin family. In terms of tissue distribution, expressed by the venom gland.

The protein resides in the secreted. Its function is as follows. Damages membranes of susceptible bacteria. Has no hemolytic activity. Not toxic to mice. Does not inhibit the proteinases elastase and cathepsin G. The protein is Porwaprin-d of Pseudechis porphyriacus (Red-bellied black snake).